The primary structure comprises 144 residues: Maximins 1/H1 (144 aa).

The N-terminal stretch at 1-18 (MNFKYIVAVSFLLASAYA) is a signal peptide. Positions 19-43 (RSEENDEQSLSQRDVLEEESLREIR) are excised as a propeptide. Asn70 is modified (asparagine amide). A propeptide spanning residues 74 to 123 (TAEEHEVMKRLEAVMRDLDSLDYPEEAAERETRSFNQEEIANLFTKKEKR) is cleaved from the precursor. Leu143 carries the leucine amide modification.

It belongs to the bombinin family. As to expression, expressed by the skin glands.

It is found in the secreted. Antibacterial peptide with amphipathic alpha-helical structure that has activity against both Gram-positive and Gram-negative bacteria. Also shows antimicrobial activity against the fungus C.albicans, but not against A.flavus nor P.uticale. It has little hemolytic activity. It possess a significant cytotoxicity against tumor cell lines, but does not possess a significant anti-HIV activity. Also shows high spermicidal activity. Its function is as follows. antibacterial peptide with activity against both Gram-positive and Gram-negative bacteria. Also shows antimicrobial activity against the fungus C.albicans. In addition, shows strong hemolytic activity. This is Maximins 1/H1 from Bombina maxima (Giant fire-bellied toad).